The chain runs to 102 residues: Vacuolar ATPase assembly integral membrane protein VMA21 homolog (102 aa).

Over 1 to 33 (MTTSSSSEPSTMATLFPNFRDQEVQSAVKNLLT) the chain is Cytoplasmic. Residues 34–54 (YSLVILIVPLASMFLLKQFFF) traverse the membrane as a helical segment. Residues 55-67 (EGLLGVSANDALT) are Lumenal-facing. A helical transmembrane segment spans residues 68–88 (YSAIIAVVLVHVVLGIWLFAA). At 89–102 (TKQEDRKKRENKQD) the chain is on the cytoplasmic side.

It belongs to the VMA21 family.

The protein resides in the endoplasmic reticulum membrane. The protein localises to the endoplasmic reticulum-Golgi intermediate compartment membrane. It localises to the cytoplasmic vesicle. It is found in the COPII-coated vesicle membrane. In terms of biological role, required for the assembly of the V0 complex of the vacuolar ATPase (V-ATPase) in the endoplasmic reticulum. This chain is Vacuolar ATPase assembly integral membrane protein VMA21 homolog, found in Caenorhabditis elegans.